Reading from the N-terminus, the 189-residue chain is RPW8-like protein 1 (189 aa).

The RPW8 domain occupies 1–153; that stretch reads MPLVELLTSA…ITRQPMDIIE (153 aa). The chain crosses the membrane as a helical span at residues 7 to 24; sequence LTSAALGLSLQLLHDAII. 2 coiled-coil regions span residues 65 to 92 and 126 to 147; these read FRKV…LKLR and DIKK…ITRQ. Asn-177 is a glycosylation site (N-linked (GlcNAc...) asparagine).

The protein belongs to the plant RPW8 protein family.

The protein resides in the membrane. Its function is as follows. Probable disease resistance (R) protein. This chain is RPW8-like protein 1, found in Arabidopsis thaliana (Mouse-ear cress).